The primary structure comprises 336 residues: HTH-type transcriptional repressor PurR (336 aa).

The 55-residue stretch at 2–56 (ATIKDVAKMAGVSTTTVSHVINKTRFVAKDTEEAVLSAIKQLNYSPSAVARSLKV) folds into the HTH lacI-type domain. The H-T-H motif DNA-binding region spans 4-23 (IKDVAKMAGVSTTTVSHVIN). Residues 48 to 56 (SAVARSLKV) mediate DNA binding. Hypoxanthine is bound by residues tyrosine 73, lysine 188, threonine 190, phenylalanine 219, and aspartate 273.

As to quaternary structure, homodimer.

The protein operates within purine metabolism; purine nucleotide biosynthesis [regulation]. Is the main repressor of the genes involved in the de novo synthesis of purine nucleotides, regulating purB, purC, purEK, purF, purHD, purL, purMN and guaBA expression. PurR is allosterically activated to bind its cognate DNA by binding the purine corepressors, hypoxanthine or guanine, thereby effecting transcription repression. The chain is HTH-type transcriptional repressor PurR from Haemophilus influenzae (strain 86-028NP).